A 334-amino-acid chain; its full sequence is Holliday junction branch migration complex subunit RuvB (334 aa).

The large ATPase domain (RuvB-L) stretch occupies residues 4–184 (ADRLIQPQIQ…FGIPLRLEFY (181 aa)). Residues arginine 24, glycine 65, lysine 68, threonine 69, threonine 70, 131 to 133 (EDY), arginine 174, tyrosine 184, and arginine 221 contribute to the ATP site. Threonine 69 contacts Mg(2+). A small ATPAse domain (RuvB-S) region spans residues 185–255 (NIKDLSTIVT…VAEHALDLLD (71 aa)). The segment at 258 to 334 (SEGFDYMDRK…YQHFELIKPE (77 aa)) is head domain (RuvB-H). Residues arginine 294, arginine 313, and arginine 318 each contribute to the DNA site.

It belongs to the RuvB family. Homohexamer. Forms an RuvA(8)-RuvB(12)-Holliday junction (HJ) complex. HJ DNA is sandwiched between 2 RuvA tetramers; dsDNA enters through RuvA and exits via RuvB. An RuvB hexamer assembles on each DNA strand where it exits the tetramer. Each RuvB hexamer is contacted by two RuvA subunits (via domain III) on 2 adjacent RuvB subunits; this complex drives branch migration. In the full resolvosome a probable DNA-RuvA(4)-RuvB(12)-RuvC(2) complex forms which resolves the HJ.

The protein resides in the cytoplasm. The catalysed reaction is ATP + H2O = ADP + phosphate + H(+). The RuvA-RuvB-RuvC complex processes Holliday junction (HJ) DNA during genetic recombination and DNA repair, while the RuvA-RuvB complex plays an important role in the rescue of blocked DNA replication forks via replication fork reversal (RFR). RuvA specifically binds to HJ cruciform DNA, conferring on it an open structure. The RuvB hexamer acts as an ATP-dependent pump, pulling dsDNA into and through the RuvAB complex. RuvB forms 2 homohexamers on either side of HJ DNA bound by 1 or 2 RuvA tetramers; 4 subunits per hexamer contact DNA at a time. Coordinated motions by a converter formed by DNA-disengaged RuvB subunits stimulates ATP hydrolysis and nucleotide exchange. Immobilization of the converter enables RuvB to convert the ATP-contained energy into a lever motion, pulling 2 nucleotides of DNA out of the RuvA tetramer per ATP hydrolyzed, thus driving DNA branch migration. The RuvB motors rotate together with the DNA substrate, which together with the progressing nucleotide cycle form the mechanistic basis for DNA recombination by continuous HJ branch migration. Branch migration allows RuvC to scan DNA until it finds its consensus sequence, where it cleaves and resolves cruciform DNA. The sequence is that of Holliday junction branch migration complex subunit RuvB from Shewanella baltica (strain OS223).